The sequence spans 353 residues: S-adenosylmethionine:tRNA ribosyltransferase-isomerase (353 aa).

This sequence belongs to the QueA family. Monomer.

The protein localises to the cytoplasm. The catalysed reaction is 7-aminomethyl-7-carbaguanosine(34) in tRNA + S-adenosyl-L-methionine = epoxyqueuosine(34) in tRNA + adenine + L-methionine + 2 H(+). Its pathway is tRNA modification; tRNA-queuosine biosynthesis. Transfers and isomerizes the ribose moiety from AdoMet to the 7-aminomethyl group of 7-deazaguanine (preQ1-tRNA) to give epoxyqueuosine (oQ-tRNA). The polypeptide is S-adenosylmethionine:tRNA ribosyltransferase-isomerase (Sodalis glossinidius (strain morsitans)).